A 256-amino-acid chain; its full sequence is V-type proton ATPase subunit D (256 aa).

The span at 211–230 shows a compositional bias: basic and acidic residues; sequence QNETAKLDAEMKLKRDRAEQ. A disordered region spans residues 211–256; that stretch reads QNETAKLDAEMKLKRDRAEQDASEVAADEEPQGETLVADQEDDVIF.

The protein belongs to the V-ATPase D subunit family. As to quaternary structure, V-ATPase is a heteromultimeric enzyme composed of a peripheral catalytic V1 complex (components A to H) attached to an integral membrane V0 proton pore complex (components: a, c, c', c'', d, e, f and VOA1). Interacts with RAV1 and RAV2 components of the RAVE complex, which are essential for the stability and assembly of V-ATPase.

It is found in the vacuole membrane. In terms of biological role, subunit of the V1 complex of vacuolar(H+)-ATPase (V-ATPase), a multisubunit enzyme composed of a peripheral complex (V1) that hydrolyzes ATP and a membrane integral complex (V0) that translocates protons. V-ATPase is responsible for acidifying and maintaining the pH of intracellular compartments. This Saccharomyces cerevisiae (strain ATCC 204508 / S288c) (Baker's yeast) protein is V-type proton ATPase subunit D.